The primary structure comprises 94 residues: Exodeoxyribonuclease 7 small subunit (94 aa).

A disordered region spans residues 1 to 21 (MPRAPNDAPSASATPSATPAS).

This sequence belongs to the XseB family. Heterooligomer composed of large and small subunits.

It localises to the cytoplasm. It catalyses the reaction Exonucleolytic cleavage in either 5'- to 3'- or 3'- to 5'-direction to yield nucleoside 5'-phosphates.. Functionally, bidirectionally degrades single-stranded DNA into large acid-insoluble oligonucleotides, which are then degraded further into small acid-soluble oligonucleotides. In Ralstonia pickettii (strain 12J), this protein is Exodeoxyribonuclease 7 small subunit.